We begin with the raw amino-acid sequence, 298 residues long: MSANNYLFSGSIVAIVTPMDSSGEIDFVRLKSLVEHHIAAGTDAIVSVGTTGEAATLSIDENVKTILKTVEFADGRIPVIAGAGANATSEAIVMTKLLNDSGVAGCLSVVPYYNKPTQEGMYQHFKAIAECTDLPQILYNVPSRTGSDLLPETVARLAKINNIVAIKEATGDLSRVAKIKELAGEDFIFLSGDDATGLESIKLGGQGVISVTNNVAAADMAKMCHLALNGQFEEAEQINQRLMALHKNLFVESNPIPVKWAAYRLGLIDTPTLRLPLTTLSEHLQPKVEDALKIAGLL.

Thr51 contributes to the pyruvate binding site. The active-site Proton donor/acceptor is Tyr139. Lys167 acts as the Schiff-base intermediate with substrate in catalysis. Ile209 serves as a coordination point for pyruvate.

This sequence belongs to the DapA family. As to quaternary structure, homotetramer; dimer of dimers.

The protein localises to the cytoplasm. It catalyses the reaction L-aspartate 4-semialdehyde + pyruvate = (2S,4S)-4-hydroxy-2,3,4,5-tetrahydrodipicolinate + H2O + H(+). It participates in amino-acid biosynthesis; L-lysine biosynthesis via DAP pathway; (S)-tetrahydrodipicolinate from L-aspartate: step 3/4. Catalyzes the condensation of (S)-aspartate-beta-semialdehyde [(S)-ASA] and pyruvate to 4-hydroxy-tetrahydrodipicolinate (HTPA). This Pasteurella multocida (strain Pm70) protein is 4-hydroxy-tetrahydrodipicolinate synthase.